A 612-amino-acid chain; its full sequence is Sulfite reductase [NADPH] flavoprotein alpha-component (612 aa).

The region spanning 64 to 202 is the Flavodoxin-like domain; the sequence is VTLISASQTG…QAQQWRQQVV (139 aa). Residues 70–75, 117–120, and 153–162 contribute to the FMN site; these read SQTGNA, STQG, and LGDTSYEHFC. The 215-residue stretch at 247 to 461 folds into the FAD-binding FR-type domain; that stretch reads TAPLTAQLSV…IEHNDNFRLP (215 aa). Residues Thr335, Lys369, 399–402, 417–419, Tyr423, and 432–435 contribute to the FAD site; these read RLYS, TVG, and GGAS. Residues 532–533, 538–542, and Asp574 contribute to the NADP(+) site; these read SR and KIYVQ. Tyr612 lines the FAD pocket.

This sequence belongs to the NADPH-dependent sulphite reductase flavoprotein subunit CysJ family. The protein in the N-terminal section; belongs to the flavodoxin family. In the C-terminal section; belongs to the flavoprotein pyridine nucleotide cytochrome reductase family. In terms of assembly, alpha(8)-beta(8). The alpha component is a flavoprotein, the beta component is a hemoprotein. It depends on FAD as a cofactor. Requires FMN as cofactor.

It carries out the reaction hydrogen sulfide + 3 NADP(+) + 3 H2O = sulfite + 3 NADPH + 4 H(+). It functions in the pathway sulfur metabolism; hydrogen sulfide biosynthesis; hydrogen sulfide from sulfite (NADPH route): step 1/1. Its function is as follows. Component of the sulfite reductase complex that catalyzes the 6-electron reduction of sulfite to sulfide. This is one of several activities required for the biosynthesis of L-cysteine from sulfate. The flavoprotein component catalyzes the electron flow from NADPH -&gt; FAD -&gt; FMN to the hemoprotein component. This chain is Sulfite reductase [NADPH] flavoprotein alpha-component, found in Yersinia pestis bv. Antiqua (strain Nepal516).